A 2026-amino-acid polypeptide reads, in one-letter code: Fatty acid synthase subunit beta (2026 aa).

Residues 148–526 are acetyltransferase (AT) domain; the sequence is ILMAFGGQGS…VDGRGVRIIA (379 aa). Residue Ser-268 is the For acetyltransferase activity of the active site. The enoyl reductase (ER) domain stretch occupies residues 579–824; it reads SQLLQAPPII…LILAAAGVAD (246 aa). Residues 1130-1604 are dehydratase (DH) domain; it reads SQVTGSVRSA…LPGDQLTVRI (475 aa). A MaoC-like domain is found at 1512-1625; the sequence is PGLIDNGSRT…LSVAAYREGT (114 aa). The interval 1643–2016 is malonyl/palmitoyl transferase (MT/PT) domain; it reads YLFTGQGSQA…LEEAAAVTGS (374 aa). Ser-1788 functions as the For malonyltransferase activity in the catalytic mechanism.

Belongs to the fungal fatty acid synthetase subunit beta family. As to quaternary structure, [Alpha(6)beta(6)] hexamers of two multifunctional subunits (alpha and beta).

The enzyme catalyses acetyl-CoA + n malonyl-CoA + 2n NADPH + 4n H(+) = a long-chain-acyl-CoA + n CoA + n CO2 + 2n NADP(+).. The catalysed reaction is holo-[ACP] + acetyl-CoA = acetyl-[ACP] + CoA. It catalyses the reaction holo-[ACP] + malonyl-CoA = malonyl-[ACP] + CoA. It carries out the reaction a (3R)-hydroxyacyl-[ACP] = a (2E)-enoyl-[ACP] + H2O. The enzyme catalyses a 2,3-saturated acyl-[ACP] + NAD(+) = a (2E)-enoyl-[ACP] + NADH + H(+). The catalysed reaction is (9Z)-octadecenoyl-[ACP] + H2O = (9Z)-octadecenoate + holo-[ACP] + H(+). It participates in secondary metabolite biosynthesis. Fatty acid synthase beta subunit; part of the gene cluster that mediates the biosynthesis of oryzines, natural products with an unusual maleidride backbone. The two subunits of the fungal fatty acid synthase oryfasA and oryfasB probably form octenoic acid. This fatty acid is most likely activated by the acyl-CoA ligase oryP to give octenyl-CoA before the citrate synthase-like protein oryE catalyzes condensation with oxaloacetate to form tricarboxylic acid. The next steps of the pathways are conjectural, but a favorite possible route has been proposed, beginning with decarboxylation and concomitant dehydration by the decarboxylase oryM, followed by tautomerization, which may lead to the production of a diene intermediate. Reduction of this diene intermediate could give the known metabolite piliformic acid. On the pathway to oryzine B and oryzine A, however, hydroxylation of the diene by the alpha-ketoglutarate-dependent dioxygenase oryG and lactonisation by the lactonohydrolases oryH or oryL could give oryzine B directly. Finally, enoyl reduction by the dehydrogenase oryD would then convert oryzine B into oryzine A. In Aspergillus oryzae (strain ATCC 42149 / RIB 40) (Yellow koji mold), this protein is Fatty acid synthase subunit beta.